The primary structure comprises 763 residues: MSSSSRRPARRAALTARSSYDESLVDAELESYLGNARSRRISRLRRLSADERQRETETEALIALSLGFPIDELLPAERPLLPAPVAAAPNDYIVVRNHILASWRADPRVPLPRSRVQETVAASYDNLVAVAHGFLAREGHINFGVSAAFPASPPPDAPQRLAASVLVVGAGLAGLAAARQLLRFGLRVLVLEGRARPGGRVYTTHLGGDQAAVELGGSVITGIHTNPLGVLARQLGIPLHKVRDSCPLYHHDGRTVDMKLDRSMDLVFNTLLEHATRLREYLKKAAEGISLGEGIERLRRFYKVAKSVEEREVLDWHLANLEFSNAGCLSELSLAHWDQDDQYEMGGDHCFLAGGNARLVHALCDGVPVLYEKTVKRIEHGEDGVSITVEGGQVFKADMALCTAPLGVLKSRSIIFEPELPERKLEAIQRLGFGLLNKVAMVFPHVFWDEEIDTFGCLNKERSKRGEFFLFYSYHTVSGGAVLIALVAGEAALEFEKVDPAVALHRVLGILKGIYGPKGVTVPDPIQSCCTRWGSDPLCSGSYSHIRVGSSGTDYDILAESVNDRLFFAGEATNRAYPATMHGALLSGLREASKILHASESRLNSDYKKYALQKSIRLINNVLDDLFMEPDLECGRFSFVFSYITPEEEQAPGLARITLEKPLLLPSKKRKVKGNQKDQDPVAEKIDQEVFYLYATVSQEQATELLECDNDKSRIAVLCKDLGVKLMGYDSTYDVCSHLISSISRAQKARKRLQGPKSLKTGL.

The 100-residue stretch at 53-152 (QRETETEALI…FGVSAAFPAS (100 aa)) folds into the SWIRM domain. Residues glutamate 192, arginine 194, arginine 200, and glutamate 571 each coordinate FAD.

It belongs to the flavin monoamine oxidase family. Requires FAD as cofactor.

In terms of biological role, probable histone demethylase. In Oryza sativa subsp. japonica (Rice), this protein is Lysine-specific histone demethylase 1 homolog 2.